Reading from the N-terminus, the 329-residue chain is Phosphate acyltransferase (329 aa).

Belongs to the PlsX family. In terms of assembly, homodimer. Probably interacts with PlsY.

It is found in the cytoplasm. It catalyses the reaction a fatty acyl-[ACP] + phosphate = an acyl phosphate + holo-[ACP]. It participates in lipid metabolism; phospholipid metabolism. Its function is as follows. Catalyzes the reversible formation of acyl-phosphate (acyl-PO(4)) from acyl-[acyl-carrier-protein] (acyl-ACP). This enzyme utilizes acyl-ACP as fatty acyl donor, but not acyl-CoA. This chain is Phosphate acyltransferase, found in Anoxybacillus flavithermus (strain DSM 21510 / WK1).